A 371-amino-acid polypeptide reads, in one-letter code: Anhydro-N-acetylmuramic acid kinase (371 aa).

9–16 (GTSLDAVD) lines the ATP pocket.

This sequence belongs to the anhydro-N-acetylmuramic acid kinase family.

The enzyme catalyses 1,6-anhydro-N-acetyl-beta-muramate + ATP + H2O = N-acetyl-D-muramate 6-phosphate + ADP + H(+). It functions in the pathway amino-sugar metabolism; 1,6-anhydro-N-acetylmuramate degradation. It participates in cell wall biogenesis; peptidoglycan recycling. Its function is as follows. Catalyzes the specific phosphorylation of 1,6-anhydro-N-acetylmuramic acid (anhMurNAc) with the simultaneous cleavage of the 1,6-anhydro ring, generating MurNAc-6-P. Is required for the utilization of anhMurNAc either imported from the medium or derived from its own cell wall murein, and thus plays a role in cell wall recycling. This is Anhydro-N-acetylmuramic acid kinase from Caulobacter vibrioides (strain ATCC 19089 / CIP 103742 / CB 15) (Caulobacter crescentus).